The primary structure comprises 233 residues: Orotidine 5'-phosphate decarboxylase (233 aa).

Residues Asp-11, Lys-34, 61–70 (DLKLHDIPNT), Thr-117, Arg-179, Gln-188, Gly-208, and Arg-209 each bind substrate. Lys-63 acts as the Proton donor in catalysis.

It belongs to the OMP decarboxylase family. Type 1 subfamily. Homodimer.

The catalysed reaction is orotidine 5'-phosphate + H(+) = UMP + CO2. It functions in the pathway pyrimidine metabolism; UMP biosynthesis via de novo pathway; UMP from orotate: step 2/2. Functionally, catalyzes the decarboxylation of orotidine 5'-monophosphate (OMP) to uridine 5'-monophosphate (UMP). This Streptococcus pneumoniae (strain Hungary19A-6) protein is Orotidine 5'-phosphate decarboxylase.